Reading from the N-terminus, the 711-residue chain is MESQMPFNEKIDYGLHALVILAQYHNVAVNPEEVKHKFDLDGKGLDLVAWLLAAKSLELKMKRVKKSIERLPFIHLPALIWRDDGQHVILMKIDTQTNRYLIFDLEERNPKVLSAAEFHEIFQGGMILITSRASIMGQLAKFDFTWFIPAVIKYRKIFVETIIVSIFLQLFALITPLFFQVVMDKVLVHRGFSTLNVITVALSVVVIFEIVLSGLRTYIFSHSTSRIDVELGAKLFRHLLALPISYFENRRVGDTVARVRELDQIRNFLTGQALTSVLDLLFSFIFFAVMWYYSPKLTIVILLSLPCYIAWSIFISPILRRRLDEKFARNADNQSFLVESVSAIDTIKALAVTPQMTNIWDKQLASYVSADFRVTVLATIGQQGVQLIQKTVMIINLWLGAHLVISGDLSIGQLITFNMLSGQVIAPVVRLAQLWQDFQQVGISITRLGDVLNSPTENYQGKLSLPEIFGDIAFKHIRFRYKPDAPIILDDVNLSVKQGEVIGIVGRSGSGKSTLTKLLQRFYIPENGQVLIDGHDLALADPNWLRRQIGVVLQDNVLLNRSIRDNIALTDPSMSMERVIYAAKLAGAHDFISELREGYNTIVGELGAGLSGGQRQRIAIARALVNNPRILIFDEATSALDYESEHIIMQNMQKICHGRTVIIIAHRLSTVKNADRIIVMEKGHIVEQGKHNQLLENENGLYYYLNQLQSN.

The Peptidase C39 domain occupies 1–129 (MESQMPFNEK…EIFQGGMILI (129 aa)). The active site involves histidine 87. Positions 158–440 (FVETIIVSIF…LAQLWQDFQQ (283 aa)) constitute an ABC transmembrane type-1 domain. The next 5 helical transmembrane spans lie at 162 to 182 (IIVS…FQVV), 195 to 215 (LNVI…LSGL), 273 to 293 (ALTS…MWYY), 299 to 319 (IVIL…SPIL), and 392 to 412 (VMII…LSIG). The ABC transporter domain occupies 472–707 (IAFKHIRFRY…ENGLYYYLNQ (236 aa)). An ATP-binding site is contributed by 506–513 (GRSGSGKS).

This sequence belongs to the ABC transporter superfamily. Protein-1 exporter (TC 3.A.1.109) family. In terms of assembly, homodimer.

The protein resides in the cell membrane. Involved in the transport of the toxin RTX-III. The chain is Toxin RTX-III translocation ATP-binding protein (apxIIIB) from Actinobacillus pleuropneumoniae (Haemophilus pleuropneumoniae).